The following is a 144-amino-acid chain: Large ribosomal subunit protein uL15 (144 aa).

The segment at 1–48 (MQLNNLKPAAGSKHAKRRVGRGIGSGLGKTAGRGHKGQKSRSGGFHKV) is disordered. The segment covering 21–31 (RGIGSGLGKTA) has biased composition (gly residues).

It belongs to the universal ribosomal protein uL15 family. As to quaternary structure, part of the 50S ribosomal subunit.

Its function is as follows. Binds to the 23S rRNA. This Cupriavidus taiwanensis (strain DSM 17343 / BCRC 17206 / CCUG 44338 / CIP 107171 / LMG 19424 / R1) (Ralstonia taiwanensis (strain LMG 19424)) protein is Large ribosomal subunit protein uL15.